Here is a 275-residue protein sequence, read N- to C-terminus: AA9 family lytic polysaccharide monooxygenase D (275 aa).

A signal peptide spans 1–17 (MKLSLLAIAAIAPFVSA). Cu(2+)-binding residues include His18 and His101. A disulfide bridge connects residues Cys67 and Cys189. His176 is an O2 binding site. Tyr186 lines the Cu(2+) pocket. Asn220 is a glycosylation site (N-linked (GlcNAc...) asparagine).

Belongs to the polysaccharide monooxygenase AA9 family. Cu(2+) serves as cofactor.

It is found in the secreted. The catalysed reaction is [(1-&gt;4)-beta-D-glucosyl]n+m + reduced acceptor + O2 = 4-dehydro-beta-D-glucosyl-[(1-&gt;4)-beta-D-glucosyl]n-1 + [(1-&gt;4)-beta-D-glucosyl]m + acceptor + H2O.. Lytic polysaccharide monooxygenase (LPMO) that depolymerizes crystalline and amorphous polysaccharides via the oxidation of scissile alpha- or beta-(1-4)-glycosidic bonds, yielding C1 or C4 oxidation products. Catalysis by LPMOs requires the reduction of the active-site copper from Cu(II) to Cu(I) by a reducing agent and H(2)O(2) or O(2) as a cosubstrate. This chain is AA9 family lytic polysaccharide monooxygenase D, found in Aspergillus tamarii.